Reading from the N-terminus, the 290-residue chain is uncharacterized protein (290 aa).

A signal peptide spans 1 to 25 (MNKKSILSKTSLGSLFFLFGTALSA). The N-palmitoyl cysteine moiety is linked to residue C26. Residue C26 is the site of S-diacylglycerol cysteine attachment. Positions 183–203 (GTDSKGSGSNNQNGGVTEKDF) are disordered. A compositionally biased stretch (low complexity) spans 186 to 197 (SKGSGSNNQNGG).

Belongs to the MG439/MG440 family.

It is found in the cell membrane. This is an uncharacterized protein from Mycoplasma pneumoniae (strain ATCC 29342 / M129 / Subtype 1) (Mycoplasmoides pneumoniae).